The chain runs to 538 residues: Chaperonin GroEL 1 (538 aa).

ATP-binding positions include 29–32, 86–90, Gly-413, and Asp-494; these read TLGP and DGTTT.

It belongs to the chaperonin (HSP60) family. As to quaternary structure, forms a cylinder of 14 subunits composed of two heptameric rings stacked back-to-back. Interacts with the co-chaperonin GroES.

It localises to the cytoplasm. It carries out the reaction ATP + H2O + a folded polypeptide = ADP + phosphate + an unfolded polypeptide.. Together with its co-chaperonin GroES, plays an essential role in assisting protein folding. The GroEL-GroES system forms a nano-cage that allows encapsulation of the non-native substrate proteins and provides a physical environment optimized to promote and accelerate protein folding. The chain is Chaperonin GroEL 1 from Mycolicibacterium paratuberculosis (strain ATCC BAA-968 / K-10) (Mycobacterium paratuberculosis).